A 650-amino-acid chain; its full sequence is XK-related protein 4 (650 aa).

Residues 1 to 15 (MAAKSDGRLKMKKSS) are compositionally biased toward basic and acidic residues. The segment at 1-44 (MAAKSDGRLKMKKSSDVAFTPLQNSDHSGSVQGLAPGLPSGSGA) is disordered. Over residues 21 to 31 (PLQNSDHSGSV) the composition is skewed to polar residues. Transmembrane regions (helical) follow at residues 114–134 (WILAAVAVYFADVGTDVWLAV) and 144–164 (WFGLTLFFVVLGSLSVQVFSF). A Phosphoserine modification is found at Ser-200. The segment at 200–238 (SAAGEGEARPSTPQRQASNASKSNIAAANSGSNSSGATR) is disordered. Low complexity predominate over residues 216 to 238 (ASNASKSNIAAANSGSNSSGATR). A run of 8 helical transmembrane segments spans residues 248–268 (CSFCIWLLQSLIHILQLGQIW), 306–326 (HLLATFLESAPQLVLQLCIIV), 331–351 (LQALQGFTAAASLVSLAWALA), 365–385 (KPISYMAVIIQFCWHFFTIAA), 396–418 (VFQLYFGIFIVLHWCIMTFWIVH), 428–448 (WEEIVFDMVVGIIYIFSWFNV), 457–477 (LFIYYFVILLENTALSALWYL), and 487–507 (FAIPALCVVFSSFLTGVVFML).

Belongs to the XK family. In terms of assembly, homodimer; homodimerization takes place upon caspase cleavage. Interacts with the processed C-terminus of XRCC4 (protein XRCC4, C-terminus); interaction promotes the phospholipid scramblase activity. Post-translationally, undergoes proteolytic processing by caspase-3 (CASP3), caspase-6 (CASP6) and caspase-7 (CASP7) to generate the XK-related protein 4, processed form, leading to its activation.

It is found in the cell membrane. It catalyses the reaction a 1,2-diacyl-sn-glycero-3-phospho-L-serine(in) = a 1,2-diacyl-sn-glycero-3-phospho-L-serine(out). Phospholipid scramblase activity is activated upon caspase cleavage to generate the XK-related protein 4, processed form. Does not act prior the onset of apoptosis. With respect to regulation, homodimerizes upon caspase cleavage. Phospholipid scramblase activity is activated following interaction with the processed C-terminus of XRCC4 (protein XRCC4, C-terminus). Its function is as follows. Phospholipid scramblase that promotes phosphatidylserine exposure on apoptotic cell surface. Phosphatidylserine is a specific marker only present at the surface of apoptotic cells and acts as a specific signal for engulfment. The sequence is that of XK-related protein 4 from Homo sapiens (Human).